A 152-amino-acid chain; its full sequence is Ribosome maturation factor RimP (152 aa).

The protein belongs to the RimP family.

The protein localises to the cytoplasm. Required for maturation of 30S ribosomal subunits. The polypeptide is Ribosome maturation factor RimP (Pseudothermotoga lettingae (strain ATCC BAA-301 / DSM 14385 / NBRC 107922 / TMO) (Thermotoga lettingae)).